The following is a 359-amino-acid chain: 4-hydroxy-3-methylbut-2-en-1-yl diphosphate synthase (flavodoxin) (359 aa).

The [4Fe-4S] cluster site is built by Cys264, Cys267, Cys299, and Glu306.

This sequence belongs to the IspG family. The cofactor is [4Fe-4S] cluster.

It carries out the reaction (2E)-4-hydroxy-3-methylbut-2-enyl diphosphate + oxidized [flavodoxin] + H2O + 2 H(+) = 2-C-methyl-D-erythritol 2,4-cyclic diphosphate + reduced [flavodoxin]. The protein operates within isoprenoid biosynthesis; isopentenyl diphosphate biosynthesis via DXP pathway; isopentenyl diphosphate from 1-deoxy-D-xylulose 5-phosphate: step 5/6. In terms of biological role, converts 2C-methyl-D-erythritol 2,4-cyclodiphosphate (ME-2,4cPP) into 1-hydroxy-2-methyl-2-(E)-butenyl 4-diphosphate. This Mycoplasmoides gallisepticum (strain R(low / passage 15 / clone 2)) (Mycoplasma gallisepticum) protein is 4-hydroxy-3-methylbut-2-en-1-yl diphosphate synthase (flavodoxin).